The primary structure comprises 2467 residues: MERIHVDLDADSPYVKSLQRTFPQFEIEARQVTDNDHANARAFSHVATKLIESEVDRDQVILDIGSAPVRHAHSNHRYHCICPMISAEDPDRLQRYAERLKKSDITDKNIASKAADLLEVMSTPDAETPSLCMHTDATCRYFGSVAVYQDVYAVHAPTSIYHQALKGVRTIYWIGFDTTPFMYKNMAGSYPTYNTNWADERVLEARNIGLGNSDLQESRLGKLSILRKKRLQPTNKIIFSVGSTIYTEDRSLLRSWHLPNVFHLKGKSNFTGRCGTIVSCEGYVIKKITISPGLYGKVENLASTMHREGFLSCKVTDTLRGERVSFAVCTYVPATLCDQMTGILATDVSVDDAQKLLVGLNQRIVVNGRTQRNTNTMQNYLLPVVAQAFSRWAREHRADLDDEKELGVRERTLTMGCCWAFKTQKITSIYKKPGTQTIKKVPAVFDSFVIPRLTSHGLDMGFRRRLKLLLEPTVKPAPAITMADVEHLRGLQQEAEEVAAAEEIREALPPLLPEIEKETVEAEVDLIMQEAGAGSVETPRGHIRVTSYPGEEKIGSYAILSPQAVLNSEKLACIHPLAEQVLVMTHKGRAGRYKVEPYHGKVIVPEGTAVPVQDFQALSESATIVFNEREFVNRYLHHIAINGGALNTDEEYYKTVKTQDTDSEYVFDIDARKCVKREDAGPLCLTGDLVDPPFHEFAYESLKTRPAAPHKVPTIGVYGVPGSGKSGIIKSAVTKKDLVVSAKKENCAEIIRDVRRMRRMDVAARTVDSVLLNGVKHPVNTLYIDEAFACHAGTLLALIAIVKPKKVVLCGDPKQCGFFNMMCLKVHFNHDICTEVYHKSISRRCTQTVTAIVSTLFYDKRMKTVNPCADKIIIDTTGTTKPHKDDLILTCFRGWVKQLQIDYKNHEIMTAAASQGLTRKGVYAVRYKVNENPLYSQTSEHVNVLLTRTEKRIVWKTLAGDPWIKTLTAKYPGDFTASLDDWQREHDAIMARVLDKPQTADVFQNKVNVCWAKALEPVLATANIVLTRQQWETLHPFKHDRAYSPEMALNFFCTRFFGVDLDSGLFSAPTVALTYRDQHWDNSPGKNMYGLNREVAKELSRRYPCITKAVDTGRVADIRNNTIKDYSPTINVVPLNRRLPHSLIVDHKGQGTTDHSGFLSKMKGKSVLVIGDPISIPGKKVESMGPLPTNTIRCDLDLGIPSHVGKYDIIFVNVRTPYRNHHYQQCEDHAIHHSMLTCKAVHHLNTGGTCVAIGYGLADRATENIITAVARSFRFTRVCQPKNTAENTEVLFVFFGKDNGNHTHDQDRLGVVLDNIYQGSTRYEAGRAPAYRVIRGDISKSADQAIVNAANSKGQPGSGVCGALYRKWPAAFDRQPIAVGTARLVKHEPLIIHAVGPNFSKMPEPEGDLKLAAAYMSIASIVNAERITKISVPLLSTGIYSGGKDRVMQSLHHLFTAFDTTDADVTIYCLDKQWETRIIEAIHRKESVEILDDDKPVDIDLVRVHPNSSLAGRPGYSVNEGKLYSYLEGTRFHQTAKDIAEIHAMWPNKSEANEQICLYILGESMSSIRSKCPVEESEASAPPHTLPCLCNYAMTAERVYRLRSAKKEQFAVCSSFLLPKYRITGVQKLQCSKPVLFSGVVPPAVHPRKYAEIILETPPPPATTTVICEPTVPERIPSPVISRAPSAESLLSLGGVSFSSSATRSSTAWSDYDRRFVVTADVHQANTSTWSIPSAPGLDVQLPSDVTDSHWSIPSASGFEVRTPSVQDLTAECAKPRGLAEIMQDFNTAPFQFLSDYRPVPAPRRRPIPSPRSTASAPPVPKPRRTKYQQPPGVARAISEAELDEYIRQHSNXRYEAGAYIFSSETGQGHLQQKSVRQCKLQEPILDRAVHEKYYAPRLDLEREKMLQKKLQLCASEGNRSRYQSRKVENMKAITAERLISGLGTYLSSEVNPVECYRVNYPVPIYSSTVINRFTSAEVAVKTCNLVIQENYPTVASYCITDEYDAYLDMVDGASCCLDTATFCPAKLRSYPKKHSYLQPEIRSAVPSPIQNTLQNVLAAATKRNCNVTQMRELPVLDSAAFNVDCFKKYACNDEYWDTFRDNPIRLTTENVTQYVTKLKGPKAAALFANTHNLKPLQEIPMDQFVMDLKRDVKVTPGTKHTEERPKVQVIQAADPLATAYLCGIHRELVRRLNAVLLPNIHTLFDMSAEDFDAIIAEHFHHGDPVLETDIASFDKSEDDAIAISALMILEDLGVDQPLLDLIEAAFGNITSVHLPTGTRFKFGAMMKSGMFLTLFVNTLVNIMIASRVLRERLTTSACAASIGDDNIVHGVVSDTLMAERCATWLNMEVKIIDAVIGIKAPYFCGGFILVDQITGTACRVADPLKRLFKLGKPLPVDDTQDCDRRRALHDEAMRWNRIGITDELVKAVESRYEIILAGLIITSLSTLAESVKNFKSIRGSPITLYG.

An Alphavirus-like MT domain is found at 28 to 257 (EARQVTDNDH…EDRSLLRSWH (230 aa)). Residues 242-261 (GSTIYTEDRSLLRSWHLPNV) are nsP1 membrane-binding. Residue Cys-417 is the site of S-palmitoyl cysteine; by host attachment. Positions 688–839 (DLVDPPFHEF…HDICTEVYHK (152 aa)) constitute a (+)RNA virus helicase ATP-binding domain. An a ribonucleoside 5'-triphosphate-binding site is contributed by 719–726 (GVPGSGKS). One can recognise a (+)RNA virus helicase C-terminal domain in the interval 840–988 (SISRRCTQTV…LDDWQREHDA (149 aa)). One can recognise a Peptidase C9 domain in the interval 1001-1320 (DVFQNKVNVC…VVLDNIYQGS (320 aa)). A nucleolus localization signal region spans residues 1002 to 1021 (VFQNKVNVCWAKALEPVLAT). Cys-1010 (for cysteine protease nsP2 activity) is an active-site residue. The Nuclear export signal signature appears at 1054–1063 (TRFFGVDLDS). His-1079 acts as the For cysteine protease nsP2 activity in catalysis. Residues 1177–1181 (PGKKV) carry the Nuclear localization signal motif. One can recognise a Macro domain in the interval 1328–1486 (APAYRVIRGD…RIIEAIHRKE (159 aa)). 6 residues coordinate ADP-D-ribose: Asp-1337, Asn-1351, Gly-1359, Gly-1438, Ile-1439, and Tyr-1440. 4 residues coordinate Zn(2+): Cys-1588, Cys-1590, Cys-1613, and Cys-1631. The disordered stretch occupies residues 1798 to 1833 (RPVPAPRRRPIPSPRSTASAPPVPKPRRTKYQQPPG). Residues 1831 to 1847 (PPGVARAISEAELDEYI) form a binding to host FXR family members region. One can recognise a RdRp catalytic domain in the interval 2224-2339 (DPVLETDIAS…HGVVSDTLMA (116 aa)).

In terms of assembly, interacts with non-structural protein 3. Interacts with RNA-directed RNA polymerase nsP4. Interacts with protease nsP2. interacts with itself. Interacts with mRNA-capping enzyme nsP1. Interacts with host DDX1. Interacts with host DDX3. Interacts (via C-terminus) with host FXR1; this interaction inhibits the formation of host stress granules on viral mRNAs and the nsp3-FXR1 complexes bind viral RNAs and probably orchestrate the assembly of viral replication complexes. Interacts (via C-terminus) with host FXR2; this interaction inhibits the formation of host stress granules on viral mRNAs and the nsp3-FXR2 complexes bind viral RNAs and probably orchestrate the assembly of viral replication complexes. Interacts (via C-terminus) with host FMR1; this interaction inhibits the formation of host stress granules on viral mRNAs and the nsp3-FMR1 complexes bind viral RNAs and probably orchestrate the assembly of viral replication complexes. As to quaternary structure, interacts with mRNA-capping enzyme nsP1. Interacts with protease nsP2. interacts with itself. In terms of assembly, interacts with RNA-directed RNA polymerase nsP4. Interacts with mRNA-capping enzyme nsP1. Interacts with KPNA1/karyopherin-alpha1; this interaction probably allows the active transport of protease nsP2 into the host nucleus. Mg(2+) serves as cofactor. Requires Mn(2+) as cofactor. Post-translationally, specific enzymatic cleavages in vivo yield mature proteins. The processing of the polyprotein is temporally regulated. In early stages (1.7 hpi), P1234 is first cleaved in trans through its nsP2 protease activity, releasing P123' and nsP4, which associate to form the early replication complex. At the same time, P1234 is also cut at the nsP1/nsP2 site early in infection but with lower efficiency. After replication of the viral minus-strand RNAs (4 hpi), the polyproteins are cut at the nsP1/nsP2 and nsP2/nsP3 sites very efficiently, preventing accumulation of P123' and P1234 and allowing the formation of the late replication complex. NsP3'/nsP4 site is not cleaved anymore and P34 is produced rather than nsP4. Specific enzymatic cleavages in vivo yield mature proteins. The processing of the polyprotein is temporally regulated. In early stages (1.7 hpi), P123 is cleaved at the nsP1/nsP2 site with low efficiency. After replication of the viral minus-strand RNAs (4 hpi), the polyproteins are cut at the nsP1/nsP2 and nsP2/nsP3 sites very efficiently, preventing accumulation of P123 and allowing the formation of the late replication complex. In terms of processing, specific enzymatic cleavages in vivo yield mature proteins. The processing of the polyprotein is temporally regulated. In early stages (1.7 hpi), P123' is cleaved at the nsP1/nsP2 site with low efficiency. After replication of the viral minus-strand RNAs (4 hpi), the polyproteins are cut at the nsP1/nsP2 and nsP2/nsP3 sites very efficiently, preventing accumulation of P123' and allowing the formation of the late replication complex. Post-translationally, palmitoylated by host palmitoyltransferases ZDHHC2 and ZDHHC19. Phosphorylated by host on serines and threonines. In terms of processing, ubiquitinated; targets the protein for rapid degradation via the ubiquitin system. Nsp4 is present in extremely low quantities due to low frequency of translation through the amber stop-codon and the degradation by the ubiquitin pathway.

It localises to the host cytoplasmic vesicle membrane. The protein localises to the host cell membrane. The protein resides in the host cell projection. Its subcellular location is the host filopodium. It is found in the host nucleus. It localises to the host cytoplasm. The catalysed reaction is GTP + S-adenosyl-L-methionine = N(7)-methyl-GTP + S-adenosyl-L-homocysteine. The enzyme catalyses N(7)-methyl-GTP + L-histidyl-[protein] = N(tele)-(N(7)-methylguanosine 5'-phospho)-L-histidyl-[protein] + diphosphate. It catalyses the reaction N(tele)-(N(7)-methylguanosine 5'-phospho)-L-histidyl-[protein] + a 5'-end diphospho-(purine-ribonucleoside) in mRNA + H(+) = a 5'-end (N(7)-methyl 5'-triphosphoguanosine)-(purine-ribonucleoside) in mRNA + L-histidyl-[protein]. It carries out the reaction a 5'-end triphospho-ribonucleoside in mRNA + H2O = a 5'-end diphospho-ribonucleoside in mRNA + phosphate + H(+). The catalysed reaction is a ribonucleoside 5'-triphosphate + H2O = a ribonucleoside 5'-diphosphate + phosphate + H(+). The enzyme catalyses ATP + H2O = ADP + phosphate + H(+). It catalyses the reaction RNA(n) + a ribonucleoside 5'-triphosphate = RNA(n+1) + diphosphate. It carries out the reaction 4-O-(ADP-D-ribosyl)-L-aspartyl-[protein] + H2O = L-aspartyl-[protein] + ADP-D-ribose + H(+). The catalysed reaction is 5-O-(ADP-D-ribosyl)-L-glutamyl-[protein] + H2O = L-glutamyl-[protein] + ADP-D-ribose + H(+). The enzyme catalyses RNA(n) + ATP = RNA(n)-3'-adenine ribonucleotide + diphosphate. It catalyses the reaction ADP-alpha-D-ribose 1''-phosphate + H2O = ADP-D-ribose + phosphate. Inhibited by sinefungin. In terms of biological role, inactive precursor of the viral replicase, which is activated by cleavages carried out by the viral protease nsP2. The early replication complex formed by the polyprotein P123 and nsP4 synthesizes the minus-strand RNAs (antigenome). Polyprotein P123 is a short-lived polyprotein that accumulates during early stage of infection. As soon P123 is cleaved into mature proteins, the plus-strand RNAs synthesis begins. Functionally, the early replication complex formed by the polyprotein P123' and nsP4 synthesizes minus-strand RNAs (antigenome). Polyprotein P123' is a short-lived polyprotein that accumulates during early stage of infection. As soon P123' is cleaved into mature proteins, the plus-strand RNAs synthesis begins. Its function is as follows. Cytoplasmic capping enzyme that catalyzes two virus-specific reactions: methyltransferase and nsP1 guanylyltransferase. mRNA-capping is necessary since all viral RNAs are synthesized in the cytoplasm, and host capping enzymes are restricted to the nucleus. The enzymatic reaction involves a covalent link between 7-methyl-GMP and nsP1, whereas eukaryotic capping enzymes form a covalent complex only with GMP. NsP1 capping consists in the following reactions: GTP is first methylated into 7-methyl-GMP and then is covalently linked to nsP1 to form the m7GMp-nsP1 complex from which 7-methyl-GMP complex is transferred to the mRNA to create the cap structure. NsP1 is also needed for the initiation of the minus-strand RNAs synthesis. Probably serves as a membrane anchor for the replication complex composed of nsP1-nsP4. Nsp1 is needed for the initiation of the minus-strand RNAs synthesis. Palmitoylated nsP1 is remodeling host cell cytoskeleton, and induces filopodium-like structure formation at the surface of the host cell. In terms of biological role, multifunctional protein whose N-terminus is part of the RNA polymerase complex and displays NTPase, RNA triphosphatase and helicase activities. NTPase and RNA triphosphatase are involved in viral RNA capping and helicase keeps a check on the dsRNA replication intermediates. The C-terminus harbors a protease that specifically cleaves the polyproteins and releases the mature proteins. Required for the shutoff of minus-strand RNAs synthesis. Inhibits host translation to ensure maximal viral gene expression and evade host immune response. Seems to be essential for minus-strand RNAs and subgenomic 26S mRNAs synthesis. Displays mono-ADP-ribosylhydrolase activity. ADP-ribosylation is a post-translational modification that controls various processes of the host cell and the virus probably needs to revert it for optimal viral replication. Binds proteins of FXR and G3BP families and sequesters them into the viral RNA replication complexes thereby inhibiting the formation of host stress granules on viral mRNAs. The nsp3-FXR and nsp3-G3BP complexes bind viral RNAs and probably orchestrate the assembly of viral replication complexes, thanks to the ability of G3BP and FXR family members to self-assemble and bind DNA. Functionally, seems to be essential for minus-strand RNAs and subgenomic 26S mRNAs synthesis. Displays mono-ADP-ribosylhydrolase activity. ADP-ribosylation is a post-translational modification that controls various processes of the host cell and the virus probably needs to revert it for optimal viral replication. Binds proteins of FXR and G3BP families and sequesters them into the viral RNA replication complexes thereby inhibiting the formation of host stress granules on viral mRNAs. The nsp3'-FXR and nsp3-G3BP complexes bind viral RNAs and probably orchestrate the assembly of viral replication complexes, thanks to the ability of G3BP and FXR family members to self-assemble and bind DNA. Its function is as follows. RNA dependent RNA polymerase. Replicates genomic and antigenomic RNA by recognizing replications specific signals. The early replication complex formed by the polyprotein P123 and nsP4 synthesizes minus-strand RNAs. The late replication complex composed of fully processed nsP1-nsP4 is responsible for the production of genomic and subgenomic plus-strand RNAs. This chain is Polyprotein P1234, found in Western equine encephalitis virus (WEEV).